We begin with the raw amino-acid sequence, 504 residues long: Maturase K (504 aa).

The protein belongs to the intron maturase 2 family. MatK subfamily.

It is found in the plastid. The protein localises to the chloroplast. Usually encoded in the trnK tRNA gene intron. Probably assists in splicing its own and other chloroplast group II introns. The protein is Maturase K of Vauquelinia californica (Arizona rosewood).